The following is a 352-amino-acid chain: MPKVITLPGDGIGPEVTAAAVQVLREVAPDVTVEEHAIGGGAYDAHGEPFPTSTRDALKEADAVLLGTVGGAHDSAWNQLPRHLRPESGLLALRKALGCYANLRPVRVQPGLEHLSPLKAELARGVDILIVRELLGGIYFDQDRKIEGDTAYNTMRYTTSEVERVAKVAFWAAEQRKGRVTSVDKANVLEVSELWRRDVQALRDRDYRSIHLNHEYVDSVAMLIVADPSRYDVILTENLFGDILSDLAAVIPGSLGLMPSASLGDGAGLFEPIHGSAPDIAGQGVANPAAAIMSVGMLLRHGLERSEAANQVDRAVALALREQPTRDLGGSADTQTFTRAVLKALGSSPSVG.

71–87 (GAHDSAWNQLPRHLRPE) is a binding site for NAD(+). Residues Arg94, Arg104, Arg132, and Asp218 each contribute to the substrate site. 3 residues coordinate Mg(2+): Asp218, Asp242, and Asp246. 275–287 (GSAPDIAGQGVAN) contributes to the NAD(+) binding site.

It belongs to the isocitrate and isopropylmalate dehydrogenases family. LeuB type 1 subfamily. In terms of assembly, homodimer. The cofactor is Mg(2+). Mn(2+) is required as a cofactor.

The protein localises to the cytoplasm. It carries out the reaction (2R,3S)-3-isopropylmalate + NAD(+) = 4-methyl-2-oxopentanoate + CO2 + NADH. It functions in the pathway amino-acid biosynthesis; L-leucine biosynthesis; L-leucine from 3-methyl-2-oxobutanoate: step 3/4. In terms of biological role, catalyzes the oxidation of 3-carboxy-2-hydroxy-4-methylpentanoate (3-isopropylmalate) to 3-carboxy-4-methyl-2-oxopentanoate. The product decarboxylates to 4-methyl-2 oxopentanoate. The sequence is that of 3-isopropylmalate dehydrogenase from Deinococcus radiodurans (strain ATCC 13939 / DSM 20539 / JCM 16871 / CCUG 27074 / LMG 4051 / NBRC 15346 / NCIMB 9279 / VKM B-1422 / R1).